We begin with the raw amino-acid sequence, 396 residues long: Elongation factor Tu 2 (396 aa).

The tr-type G domain occupies 10-206; that stretch reads KPHCNVGTIG…AVDDYIPQPE (197 aa). The segment at 19-26 is G1; that stretch reads GHVDHGKT. GTP is bound at residue 19-26; sequence GHVDHGKT. Threonine 26 contacts Mg(2+). Positions 60-64 are G2; that stretch reads GITIS. The G3 stretch occupies residues 81–84; the sequence is DCPG. GTP contacts are provided by residues 81-85 and 136-139; these read DCPGH and NKCD. The interval 136-139 is G4; that stretch reads NKCD. A G5 region spans residues 174–176; that stretch reads SAL.

The protein belongs to the TRAFAC class translation factor GTPase superfamily. Classic translation factor GTPase family. EF-Tu/EF-1A subfamily. As to quaternary structure, monomer.

It localises to the cytoplasm. It catalyses the reaction GTP + H2O = GDP + phosphate + H(+). Functionally, GTP hydrolase that promotes the GTP-dependent binding of aminoacyl-tRNA to the A-site of ribosomes during protein biosynthesis. The protein is Elongation factor Tu 2 of Rhodospirillum rubrum (strain ATCC 11170 / ATH 1.1.1 / DSM 467 / LMG 4362 / NCIMB 8255 / S1).